A 305-amino-acid polypeptide reads, in one-letter code: Ornithine carbamoyltransferase (305 aa).

Carbamoyl phosphate contacts are provided by residues 54 to 57 (STRT), Gln-81, Arg-105, and 132 to 135 (HPCQ). Residues Asn-163, Asp-223, and 227–228 (SM) contribute to the L-ornithine site. Carbamoyl phosphate contacts are provided by residues 262–263 (CL) and Arg-290.

Belongs to the aspartate/ornithine carbamoyltransferase superfamily. OTCase family.

It localises to the cytoplasm. It catalyses the reaction carbamoyl phosphate + L-ornithine = L-citrulline + phosphate + H(+). It participates in amino-acid biosynthesis; L-arginine biosynthesis; L-arginine from L-ornithine and carbamoyl phosphate: step 1/3. In terms of biological role, reversibly catalyzes the transfer of the carbamoyl group from carbamoyl phosphate (CP) to the N(epsilon) atom of ornithine (ORN) to produce L-citrulline. The polypeptide is Ornithine carbamoyltransferase (Agrobacterium fabrum (strain C58 / ATCC 33970) (Agrobacterium tumefaciens (strain C58))).